The following is a 75-amino-acid chain: CDC42 small effector protein 1 (75 aa).

2 S-palmitoyl cysteine lipidation sites follow: cysteine 10 and cysteine 11. Positions 30-43 (IGEPTNFVHLTHIG) constitute a CRIB domain. The disordered stretch occupies residues 45-75 (GEMADGMQPSGPIKEQMRSKVPHANGRNSLL).

Belongs to the CDC42SE/SPEC family.

It localises to the cytoplasm. The protein localises to the cytoskeleton. Its subcellular location is the cell membrane. Probably involved in the organization of the actin cytoskeleton by acting downstream of CDC42, inducing actin filament assembly. The protein is CDC42 small effector protein 1 (cdc42se1) of Danio rerio (Zebrafish).